The following is an 834-amino-acid chain: Kinesin-like protein KIF18B (834 aa).

The Kinesin motor domain occupies 9 to 353; the sequence is VVRVVVRVRP…LKYADRAKEI (345 aa). 111–118 serves as a coordination point for ATP; it reads GATGAGKT. A coiled-coil region spans residues 368-404; the sequence is ISQYATICQQLQAEVAFLREKLQMYEAGAQALQQQCS. 4 disordered regions span residues 400–508, 602–642, 655–686, and 800–834; these read QQQC…ADHS, LGAP…NLEM, RGSL…RVCP, and KKPN…TESY. A compositionally biased stretch (low complexity) spans 411–432; that stretch reads SIPQSLSSSSLQPGPSSQSSTL. A Phosphothreonine modification is found at T431. The span at 462 to 474 shows a compositional bias: polar residues; it reads EQEQCPQDKQCPT. Position 484 is a phosphoserine (S484). The segment covering 611–620 has biased composition (basic and acidic residues); it reads TSDKTFQKPT. The Nuclear localization signal motif lies at 619-627; it reads PTKEKKRKL. Phosphoserine is present on residues S634 and S657. T669 bears the Phosphothreonine mark. At S814 the chain carries Phosphoserine.

The protein belongs to the TRAFAC class myosin-kinesin ATPase superfamily. Kinesin family. As to quaternary structure, interacts with MAPRE1; this interaction is required for efficient accumulation at microtubule plus ends. Interacts with KIF2C at microtubule tips; this interaction increases the affinity of both partners for microtubule plus ends and is required for robust microtubule depolymerization. KIF2C phosphorylation by AURKA or AURKB strongly reduces KIF18B-binding.

The protein resides in the nucleus. It is found in the cytoplasm. It localises to the cytoskeleton. Functionally, in complex with KIF2C, constitutes the major microtubule plus-end depolymerizing activity in mitotic cells. Its major role may be to transport KIF2C and/or MAPRE1 along microtubules. This is Kinesin-like protein KIF18B (Kif18b) from Mus musculus (Mouse).